A 172-amino-acid chain; its full sequence is MDLKGLIRDIPNFPKPGIVFRDITTLLSDAEGLRYTIDTLTEKCKAANLSPDYIVGMESRGFLFGVPLAYQLNAGFVPVRKPGKLPAAVHQVEYELEYGTDSLEIHQDALNNHHNVLIVDDLMATGGTAKATADLLEKIGCNVLGFAFIIELKALEGRKKLPNLPIISLVDY.

It belongs to the purine/pyrimidine phosphoribosyltransferase family. In terms of assembly, homodimer.

Its subcellular location is the cytoplasm. It carries out the reaction AMP + diphosphate = 5-phospho-alpha-D-ribose 1-diphosphate + adenine. It functions in the pathway purine metabolism; AMP biosynthesis via salvage pathway; AMP from adenine: step 1/1. In terms of biological role, catalyzes a salvage reaction resulting in the formation of AMP, that is energically less costly than de novo synthesis. The protein is Adenine phosphoribosyltransferase of Crocosphaera subtropica (strain ATCC 51142 / BH68) (Cyanothece sp. (strain ATCC 51142)).